We begin with the raw amino-acid sequence, 76 residues long: Exodeoxyribonuclease 7 small subunit (76 aa).

It belongs to the XseB family. In terms of assembly, heterooligomer composed of large and small subunits.

Its subcellular location is the cytoplasm. It catalyses the reaction Exonucleolytic cleavage in either 5'- to 3'- or 3'- to 5'-direction to yield nucleoside 5'-phosphates.. Functionally, bidirectionally degrades single-stranded DNA into large acid-insoluble oligonucleotides, which are then degraded further into small acid-soluble oligonucleotides. The polypeptide is Exodeoxyribonuclease 7 small subunit (Lactiplantibacillus plantarum (strain ATCC BAA-793 / NCIMB 8826 / WCFS1) (Lactobacillus plantarum)).